Here is a 122-residue protein sequence, read N- to C-terminus: Small ribosomal subunit protein uS13 (122 aa).

Residues 99-122 (RGQRTHTNARTRKGPAKAIAGKKK) form a disordered region.

The protein belongs to the universal ribosomal protein uS13 family. In terms of assembly, part of the 30S ribosomal subunit. Forms a loose heterodimer with protein S19. Forms two bridges to the 50S subunit in the 70S ribosome.

In terms of biological role, located at the top of the head of the 30S subunit, it contacts several helices of the 16S rRNA. In the 70S ribosome it contacts the 23S rRNA (bridge B1a) and protein L5 of the 50S subunit (bridge B1b), connecting the 2 subunits; these bridges are implicated in subunit movement. Contacts the tRNAs in the A and P-sites. The protein is Small ribosomal subunit protein uS13 of Cereibacter sphaeroides (strain ATCC 17029 / ATH 2.4.9) (Rhodobacter sphaeroides).